Consider the following 621-residue polypeptide: DnaJ homolog subfamily C member 2 (621 aa).

Met-1 bears the N-acetylmethionine mark. Ser-47, Ser-49, Ser-60, and Ser-63 each carry phosphoserine. The 74-residue stretch at Asp-88 to Asp-161 folds into the J domain. Residues Val-160 to Gln-250 are ZRF1-UBD. Ser-183 bears the Phosphoserine mark. Disordered regions lie at residues Glu-294–Ala-315 and Glu-427–Asn-453. SANT domains are found at residues Asn-449–Pro-511 and Thr-549–Lys-604.

As to quaternary structure, component of ribosome-associated complex (RAC), a heterodimer composed of Hsp70/DnaK-type chaperone HSPA14 and Hsp40/DnaJ-type chaperone DNAJC2. Interacts (via ZRF1-UBD region) with ID1. In terms of processing, phosphorylated in M (mitotic) phase.

The protein resides in the nucleus. The protein localises to the cytoplasm. Its subcellular location is the cytosol. Its function is as follows. Acts both as a chaperone in the cytosol and as a chromatin regulator in the nucleus. When cytosolic, acts as a molecular chaperone: component of the ribosome-associated complex (RAC), a complex involved in folding or maintaining nascent polypeptides in a folding-competent state. In the RAC complex, stimulates the ATPase activity of the ribosome-associated pool of Hsp70-type chaperones HSPA14 that bind to the nascent polypeptide chain. When nuclear, mediates the switching from polycomb-repressed genes to an active state: specifically recruited at histone H2A ubiquitinated at 'Lys-119' (H2AK119ub), and promotes the displacement of the polycomb PRC1 complex from chromatin, thereby facilitating transcription activation. The polypeptide is DnaJ homolog subfamily C member 2 (DNAJC2) (Macaca fascicularis (Crab-eating macaque)).